The following is an 89-amino-acid chain: Small ribosomal subunit protein uS15 (89 aa).

This sequence belongs to the universal ribosomal protein uS15 family. In terms of assembly, part of the 30S ribosomal subunit. Forms a bridge to the 50S subunit in the 70S ribosome, contacting the 23S rRNA.

One of the primary rRNA binding proteins, it binds directly to 16S rRNA where it helps nucleate assembly of the platform of the 30S subunit by binding and bridging several RNA helices of the 16S rRNA. Functionally, forms an intersubunit bridge (bridge B4) with the 23S rRNA of the 50S subunit in the ribosome. This Methylorubrum populi (strain ATCC BAA-705 / NCIMB 13946 / BJ001) (Methylobacterium populi) protein is Small ribosomal subunit protein uS15.